Consider the following 233-residue polypeptide: Sugar fermentation stimulation protein homolog (233 aa).

It belongs to the SfsA family.

This is Sugar fermentation stimulation protein homolog from Teredinibacter turnerae (strain ATCC 39867 / T7901).